Consider the following 353-residue polypeptide: Dihydroorotate dehydrogenase (quinone) (353 aa).

Residues 67–71 (AGFDK) and Thr-91 contribute to the FMN site. Substrate is bound at residue Lys-71. Residue 116–120 (NRMGF) participates in substrate binding. 2 residues coordinate FMN: Asn-144 and Asn-177. Residue Asn-177 coordinates substrate. Ser-180 (nucleophile) is an active-site residue. Asn-182 serves as a coordination point for substrate. 2 residues coordinate FMN: Lys-215 and Thr-243. 244 to 245 (NT) contributes to the substrate binding site. FMN-binding positions include Gly-264, Gly-293, and 314–315 (YT).

The protein belongs to the dihydroorotate dehydrogenase family. Type 2 subfamily. In terms of assembly, monomer. FMN serves as cofactor.

Its subcellular location is the cell membrane. It carries out the reaction (S)-dihydroorotate + a quinone = orotate + a quinol. The protein operates within pyrimidine metabolism; UMP biosynthesis via de novo pathway; orotate from (S)-dihydroorotate (quinone route): step 1/1. Its function is as follows. Catalyzes the conversion of dihydroorotate to orotate with quinone as electron acceptor. In Gloeobacter violaceus (strain ATCC 29082 / PCC 7421), this protein is Dihydroorotate dehydrogenase (quinone).